The primary structure comprises 631 residues: 1-deoxy-D-xylulose-5-phosphate synthase (631 aa).

Thiamine diphosphate contacts are provided by residues histidine 87 and 128 to 130 (GHS). Aspartate 159 is a binding site for Mg(2+). Thiamine diphosphate is bound by residues 160 to 161 (GA), asparagine 188, phenylalanine 295, and glutamate 378. Asparagine 188 is a Mg(2+) binding site.

The protein belongs to the transketolase family. DXPS subfamily. In terms of assembly, homodimer. The cofactor is Mg(2+). Thiamine diphosphate is required as a cofactor.

The catalysed reaction is D-glyceraldehyde 3-phosphate + pyruvate + H(+) = 1-deoxy-D-xylulose 5-phosphate + CO2. Its pathway is metabolic intermediate biosynthesis; 1-deoxy-D-xylulose 5-phosphate biosynthesis; 1-deoxy-D-xylulose 5-phosphate from D-glyceraldehyde 3-phosphate and pyruvate: step 1/1. In terms of biological role, catalyzes the acyloin condensation reaction between C atoms 2 and 3 of pyruvate and glyceraldehyde 3-phosphate to yield 1-deoxy-D-xylulose-5-phosphate (DXP). The polypeptide is 1-deoxy-D-xylulose-5-phosphate synthase (Pseudomonas syringae pv. tomato (strain ATCC BAA-871 / DC3000)).